The sequence spans 301 residues: Homoserine O-acetyltransferase (301 aa).

The active-site Acyl-thioester intermediate is the cysteine 142. Positions 163 and 192 each coordinate substrate. Catalysis depends on histidine 235, which acts as the Proton acceptor. Residue glutamate 237 is part of the active site. Arginine 249 contributes to the substrate binding site.

The protein belongs to the MetA family.

It localises to the cytoplasm. It catalyses the reaction L-homoserine + acetyl-CoA = O-acetyl-L-homoserine + CoA. It participates in amino-acid biosynthesis; L-methionine biosynthesis via de novo pathway; O-acetyl-L-homoserine from L-homoserine: step 1/1. Transfers an acetyl group from acetyl-CoA to L-homoserine, forming acetyl-L-homoserine. In Bacillus mycoides (strain KBAB4) (Bacillus weihenstephanensis), this protein is Homoserine O-acetyltransferase.